A 348-amino-acid chain; its full sequence is Anthranilate phosphoribosyltransferase (348 aa).

5-phospho-alpha-D-ribose 1-diphosphate is bound by residues Gly-81, 84-85, 91-94, 109-117, and Ser-121; these read GD, NVST, and KHGNRAVSG. Gly-81 is a binding site for anthranilate. Ser-93 provides a ligand contact to Mg(2+). Asn-112 provides a ligand contact to anthranilate. Arg-167 serves as a coordination point for anthranilate. Mg(2+) is bound by residues Asp-226 and Glu-227.

It belongs to the anthranilate phosphoribosyltransferase family. As to quaternary structure, homodimer. It depends on Mg(2+) as a cofactor.

The enzyme catalyses N-(5-phospho-beta-D-ribosyl)anthranilate + diphosphate = 5-phospho-alpha-D-ribose 1-diphosphate + anthranilate. The protein operates within amino-acid biosynthesis; L-tryptophan biosynthesis; L-tryptophan from chorismate: step 2/5. Functionally, catalyzes the transfer of the phosphoribosyl group of 5-phosphorylribose-1-pyrophosphate (PRPP) to anthranilate to yield N-(5'-phosphoribosyl)-anthranilate (PRA). This is Anthranilate phosphoribosyltransferase from Azotobacter vinelandii (strain DJ / ATCC BAA-1303).